Here is a 252-residue protein sequence, read N- to C-terminus: Phosphate import ATP-binding protein PstB (252 aa).

The region spanning 6 to 247 (ITIEKLNLYY…PKDERTEKYI (242 aa)) is the ABC transporter domain. Residue 38-45 (GPSGCGKS) coordinates ATP.

Belongs to the ABC transporter superfamily. Phosphate importer (TC 3.A.1.7) family. The complex is composed of two ATP-binding proteins (PstB), two transmembrane proteins (PstC and PstA) and a solute-binding protein (PstS).

It is found in the cell membrane. The enzyme catalyses phosphate(out) + ATP + H2O = ADP + 2 phosphate(in) + H(+). In terms of biological role, part of the ABC transporter complex PstSACB involved in phosphate import. Responsible for energy coupling to the transport system. The polypeptide is Phosphate import ATP-binding protein PstB (Lactobacillus delbrueckii subsp. bulgaricus (strain ATCC 11842 / DSM 20081 / BCRC 10696 / JCM 1002 / NBRC 13953 / NCIMB 11778 / NCTC 12712 / WDCM 00102 / Lb 14)).